A 1642-amino-acid chain; its full sequence is Cortactin-binding protein 2 (1642 aa).

Disordered stretches follow at residues 1–27, 203–222, 366–433, 446–471, and 491–611; these read MATD…AEAA, KKKT…RSTE, IGAS…HPGL, GSNA…SPTS, and RFTS…PSID. The stretch at 119 to 276 forms a coiled coil; that stretch reads RKMQERMSTQ…EQLKRGTDSK (158 aa). Residues 385–394 are compositionally biased toward polar residues; sequence GPSTGSTADL. The segment covering 395 to 407 has biased composition (low complexity); it reads TSSPTPVPSTVSP. R491 carries the asymmetric dimethylarginine modification. Pro residues predominate over residues 497-506; sequence AGAPPRPGAP. The segment covering 576-586 has biased composition (polar residues); sequence TVASPPSTLPQ. 6 ANK repeats span residues 702 to 732, 736 to 765, 769 to 798, 802 to 831, 835 to 864, and 904 to 934; these read GRPT…DINY, DGHS…QVNA, NGFT…NINH, GGQT…DRSV, DGWT…PAHG, and EGWT…EPER. Positions 1441-1469 are disordered; the sequence is SGAWRKVSTSPRKKSGRFSSPTWNKPDLS. S1513 is modified (phosphoserine). The tract at residues 1545-1642 is disordered; it reads LRRFDSSGNN…NSRDLEPTQK (98 aa). Polar residues-rich tracts occupy residues 1552–1563 and 1571–1588; these read GNNPVFSATVNN and KEVS…SNSK. Residues 1613-1627 show a composition bias toward low complexity; the sequence is SQNTKRSSSSSNTRQ.

Interacts with CTTN/cortactin SH3 domain. Interacts with STRN, STRN4/zinedin and MOB4/phocein; this interactions mediate the association with the STRIPAK core complex and may regulate dendritic spine distribution of the STRIPAK complex in hippocampal neurons. Activation of glutamate receptors weakens the interaction with STRN and STRN4.

The protein localises to the cytoplasm. It is found in the cell cortex. It localises to the cell projection. Its subcellular location is the dendritic spine. Functionally, regulates the dendritic spine distribution of CTTN/cortactin in hippocampal neurons, and thus controls dendritic spinogenesis and dendritic spine maintenance. Associates with the striatin-interacting phosphatase and kinase (STRIPAK) core complex to regulate dendritic spine distribution of the STRIPAK complex in hippocampal neurons. The polypeptide is Cortactin-binding protein 2 (CTTNBP2) (Muntiacus muntjak (Barking deer)).